We begin with the raw amino-acid sequence, 241 residues long: SURF1-like protein (241 aa).

2 helical membrane-spanning segments follow: residues 5 to 25 (LTVL…LNRL) and 199 to 219 (LEYA…YRIY).

This sequence belongs to the SURF1 family.

The protein localises to the cell membrane. The protein is SURF1-like protein of Rickettsia bellii (strain RML369-C).